Reading from the N-terminus, the 37-residue chain is Cytochrome b6-f complex subunit 5 (37 aa).

Residues 5 to 25 (LLSGIVLGLVPVTIAGLFVTA) traverse the membrane as a helical segment.

This sequence belongs to the PetG family. As to quaternary structure, the 4 large subunits of the cytochrome b6-f complex are cytochrome b6, subunit IV (17 kDa polypeptide, PetD), cytochrome f and the Rieske protein, while the 4 small subunits are PetG, PetL, PetM and PetN. The complex functions as a dimer.

It is found in the plastid. It localises to the chloroplast thylakoid membrane. In terms of biological role, component of the cytochrome b6-f complex, which mediates electron transfer between photosystem II (PSII) and photosystem I (PSI), cyclic electron flow around PSI, and state transitions. PetG is required for either the stability or assembly of the cytochrome b6-f complex. This chain is Cytochrome b6-f complex subunit 5, found in Stigeoclonium helveticum (Green alga).